Reading from the N-terminus, the 296-residue chain is Homeobox protein SIX2 (296 aa).

The segment at residues Gly124–Glu183 is a DNA-binding region (homeobox). Positions Val168–Leu284 are disordered. Over residues Asp179–Ser190 the composition is skewed to basic and acidic residues. Composition is skewed to low complexity over residues Glu191–Asn206 and His228–Leu237. Over residues Pro254–Val264 the composition is skewed to pro residues.

Belongs to the SIX/Sine oculis homeobox family. In terms of assembly, interacts with TCF7L2; in a canonical Wnt signaling independent manner; prevents transcription of differentiation genes in cap mesenchyme. Interacts with OSR1; form a strong repressor complex with TCF7L2, TLE2 and TLE3 to prevent the activation of Wnt/beta-catenin target genes in the cap mesenchyme. Interacts with HOXA11, EYA1 and EYA3. As to expression, expressed in phalangeal tendons, in smooth muscle and in head and body mesenchyme.

It is found in the nucleus. Functionally, transcription factor that plays an important role in the development of several organs, including kidney, skull and stomach. During kidney development, maintains cap mesenchyme multipotent nephron progenitor cells in an undifferentiated state by opposing the inductive signals emanating from the ureteric bud and cooperates with WNT9B to promote renewing progenitor cells proliferation. Acts through its interaction with TCF7L2 and OSR1 in a canonical Wnt signaling independent manner preventing transcription of differentiation genes in cap mesenchyme such as WNT4. Also acts independently of OSR1 to activate expression of many cap mesenchyme genes, including itself, GDNF and OSR1. During craniofacial development plays a role in growth and elongation of the cranial base through regulation of chondrocyte differentiation. During stomach organogenesis, controls pyloric sphincter formation and mucosal growth through regulation of a gene network including NKX2-5, BMPR1B, BMP4, SOX9 and GREM1. During branchial arch development, acts to mediate HOXA2 control over the insulin-like growth factor pathway. May also be involved in limb tendon and ligament development. Plays a role in cell proliferation and migration. The chain is Homeobox protein SIX2 (Six2) from Mus musculus (Mouse).